Here is a 116-residue protein sequence, read N- to C-terminus: Large ribosomal subunit protein bL20 (116 aa).

Belongs to the bacterial ribosomal protein bL20 family.

Functionally, binds directly to 23S ribosomal RNA and is necessary for the in vitro assembly process of the 50S ribosomal subunit. It is not involved in the protein synthesizing functions of that subunit. In Nitratiruptor sp. (strain SB155-2), this protein is Large ribosomal subunit protein bL20.